The chain runs to 94 residues: Pyrimidine/purine nucleoside phosphorylase (94 aa).

It belongs to the nucleoside phosphorylase PpnP family.

The catalysed reaction is a purine D-ribonucleoside + phosphate = a purine nucleobase + alpha-D-ribose 1-phosphate. It catalyses the reaction adenosine + phosphate = alpha-D-ribose 1-phosphate + adenine. The enzyme catalyses cytidine + phosphate = cytosine + alpha-D-ribose 1-phosphate. It carries out the reaction guanosine + phosphate = alpha-D-ribose 1-phosphate + guanine. The catalysed reaction is inosine + phosphate = alpha-D-ribose 1-phosphate + hypoxanthine. It catalyses the reaction thymidine + phosphate = 2-deoxy-alpha-D-ribose 1-phosphate + thymine. The enzyme catalyses uridine + phosphate = alpha-D-ribose 1-phosphate + uracil. It carries out the reaction xanthosine + phosphate = alpha-D-ribose 1-phosphate + xanthine. Its function is as follows. Catalyzes the phosphorolysis of diverse nucleosides, yielding D-ribose 1-phosphate and the respective free bases. Can use uridine, adenosine, guanosine, cytidine, thymidine, inosine and xanthosine as substrates. Also catalyzes the reverse reactions. In Citrobacter koseri (strain ATCC BAA-895 / CDC 4225-83 / SGSC4696), this protein is Pyrimidine/purine nucleoside phosphorylase.